The primary structure comprises 353 residues: uncharacterized protein (353 aa).

The first 30 residues, M1–A30, serve as a signal peptide directing secretion.

This is an uncharacterized protein from Salmonella typhi.